The chain runs to 1341 residues: DNA-directed RNA polymerase subunit beta (1341 aa).

It belongs to the RNA polymerase beta chain family. As to quaternary structure, the RNAP catalytic core consists of 2 alpha, 1 beta, 1 beta' and 1 omega subunit. When a sigma factor is associated with the core the holoenzyme is formed, which can initiate transcription.

It carries out the reaction RNA(n) + a ribonucleoside 5'-triphosphate = RNA(n+1) + diphosphate. Its function is as follows. DNA-dependent RNA polymerase catalyzes the transcription of DNA into RNA using the four ribonucleoside triphosphates as substrates. The chain is DNA-directed RNA polymerase subunit beta from Pseudoalteromonas translucida (strain TAC 125).